We begin with the raw amino-acid sequence, 261 residues long: UPF0328 protein ECU03_1620 (261 aa).

The protein belongs to the UPF0328 family.

This chain is UPF0328 protein ECU03_1620, found in Encephalitozoon cuniculi (strain GB-M1) (Microsporidian parasite).